We begin with the raw amino-acid sequence, 249 residues long: Testis-expressed protein 101 (249 aa).

Residues 1 to 25 (MGTPRIQHLLILLVLGASLLTSGLE) form the signal peptide. N-linked (GlcNAc...) asparagine glycosylation is found at Asn45 and Asn159. Residues 140–211 (CPTCVALGTC…PMFVREACPH (72 aa)) form the UPAR/Ly6 domain. Residue Asn222 is the site of GPI-anchor amidated asparagine attachment. Residues 223 to 249 (GATCLPIPVWGLQLLLPLLLPSFIHFS) constitute a propeptide, removed in mature form.

Interacts with VAMP3. Interacts with LY6K. Interacts with DPEP3; co-localized on the cell surface of spermatocytes, spermatids, and testicular spermatozoa, co-localized only in cytoplasmic droplets of caput and corpus epididymal sperm. Interacts with ADAM5. Post-translationally, N-glycosylated; by high mannose and/or biantennary complex and/or certain types of hybrid oligosaccharides; possesses different oligosaccharides chains according to its subcellular localization in the testis. In terms of processing, sheds from membrane raft by ACE and released from the cell surface of epididymal sperm while it passes through the caput epididymis leading to disappearance of TEX101 on spermatozoa; is essential to produce fertile spermatozoa. Detected in testis and spermatogonia. Not detected in spermatocytes. Detected in blood leukocytes.

The protein localises to the cell membrane. It is found in the membrane raft. Its subcellular location is the cytoplasmic vesicle. It localises to the secretory vesicle. The protein resides in the acrosome. The protein localises to the secreted. Its function is as follows. Plays a role in fertilization by controlling binding of sperm to zona pellucida and migration of spermatozoa into the oviduct. May play a role in signal transduction and promote protein tyrosine phosphorylation. This chain is Testis-expressed protein 101, found in Homo sapiens (Human).